The sequence spans 151 residues: U1 small nuclear ribonucleoprotein C (151 aa).

Residues 4 to 36 (YYCDYCDTYLTHDSPSVRKTHCTGRKHKDNVKF) form a Matrin-type zinc finger.

Belongs to the U1 small nuclear ribonucleoprotein C family. As to quaternary structure, U1 snRNP is composed of the 7 core Sm proteins B/B', D1, D2, D3, E, F and G that assemble in a heptameric protein ring on the Sm site of the small nuclear RNA to form the core snRNP, and at least 3 U1 snRNP-specific proteins U1-70K, U1-A and U1-C. U1-C interacts with U1 snRNA and the 5' splice-site region of the pre-mRNA.

The protein resides in the nucleus. In terms of biological role, component of the spliceosomal U1 snRNP, which is essential for recognition of the pre-mRNA 5' splice-site and the subsequent assembly of the spliceosome. U1-C is directly involved in initial 5' splice-site recognition for both constitutive and regulated alternative splicing. The interaction with the 5' splice-site seems to precede base-pairing between the pre-mRNA and the U1 snRNA. Stimulates commitment or early (E) complex formation by stabilizing the base pairing of the 5' end of the U1 snRNA and the 5' splice-site region. The protein is U1 small nuclear ribonucleoprotein C of Anopheles darlingi (Mosquito).